Consider the following 1157-residue polypeptide: Probable inactive leucine-rich repeat receptor kinase XIAO (1157 aa).

An N-terminal signal peptide occupies residues 1 to 21 (MPPPPRLLFLLVMLLVVAAPG). The N-linked (GlcNAc...) asparagine glycan is linked to N58. LRR repeat units follow at residues 101–125 (LVYL…LSRI), 127–149 (SLRA…FLAN), 150–172 (LTNL…VSFP), 173–196 (PSLK…VSAS), 198–220 (TSLQ…SLGT), 221–245 (LQDL…LSNC), 247–269 (ALLH…VAAI), 270–293 (PSLQ…AFGG), 296–319 (NSSL…VSLG), 320–343 (KDLQ…LAGA), 344–367 (GGLT…VGQL), 368–391 (TALQ…IGRC), 393–414 (ALQV…ALGG), 415–439 (LRRL…LGNL), 440–463 (SWLE…LFVL), 464–487 (GNLT…IGNL), 489–511 (ALQS…IGNL), 513–536 (NLRV…LFGL), 537–559 (PQLQ…GFSS), 561–583 (WSLR…TYGY), 584–608 (LPSL…LANC), 609–631 (SNLT…DFAR), 632–656 (LGEL…ISNC), 658–680 (SLVT…LSNL), 681–704 (SKLQ…LAQI), and 706–728 (GMLS…LGSR). N-linked (GlcNAc...) asparagine glycosylation occurs at N149. N-linked (GlcNAc...) asparagine glycans are attached at residues N192, N204, and N244. A glycan (N-linked (GlcNAc...) asparagine) is linked at N296. N-linked (GlcNAc...) asparagine glycosylation is present at N438. Residues N465, N494, and N524 are each glycosylated (N-linked (GlcNAc...) asparagine). N567, N607, N610, N655, N679, N692, and N711 each carry an N-linked (GlcNAc...) asparagine glycan. Residues 765–785 (LALLIGVVAATVLLLVLFCCC) traverse the membrane as a helical segment. The interval 804-825 (VKKRRRSPGRGSGSSGTSTDSV) is disordered. Residues 849-1144 (FDEENVLSRG…LEGCRVGPDI (296 aa)) enclose the Protein kinase domain. Residues 855-863 (LSRGRHGLV), 930-932 (DYM), 936-939 (NLAT), 980-985 (DVKPQN), and D998 contribute to the ATP site.

The protein belongs to the protein kinase superfamily. Ser/Thr protein kinase family. In terms of tissue distribution, expressed in developing culm, coleoptile, primary root, young spikelet, young leaf blade and leaf sheath, floral meristem primordia, stamen primordia, and lemma and palea primordia.

Its subcellular location is the cell membrane. Functions in the early stages of organ development by regulating cell division rate. Is probably involved in the regulation of a number of cell-cycle genes. May act as regulator of brassinosteroid (BR) signaling and cell-cycle controlling organ growth. In Oryza sativa subsp. japonica (Rice), this protein is Probable inactive leucine-rich repeat receptor kinase XIAO.